The sequence spans 116 residues: Cocaine- and amphetamine-regulated transcript protein (116 aa).

Positions 1–27 are cleaved as a signal peptide; the sequence is MESSRVRLLPLLGAALLLMLPLLGTRA. Tyr41 is modified (phosphotyrosine). Ser48 is modified (phosphoserine). Intrachain disulfides connect Cys82–Cys100, Cys88–Cys108, and Cys102–Cys115.

The protein belongs to the CART family. Hypothalamus. Found in neurons of the ventrolateral part of the arcuate nucleus, in the external zone of the median eminence, and also found in terminals in the periventricular part of the paraventricular nucleus.

It localises to the secreted. Functionally, satiety factor closely associated with the actions of leptin and neuropeptide Y; this anorectic peptide inhibits both normal and starvation-induced feeding and completely blocks the feeding response induced by neuropeptide Y and regulated by leptin in the hypothalamus. It promotes neuronal development and survival in vitro. The chain is Cocaine- and amphetamine-regulated transcript protein (CARTPT) from Homo sapiens (Human).